Reading from the N-terminus, the 732-residue chain is Integrator complex subunit 13 (732 aa).

Over residues 564 to 648 (PPEEEERKKR…DETPHMEKSK (85 aa)) the composition is skewed to basic and acidic residues. The tract at residues 564-650 (PPEEEERKKR…TPHMEKSKGP (87 aa)) is disordered. Positions 572–582 (KRGRKREDRED) match the Nuclear localization signal (NLS) motif. Lys611 participates in a covalent cross-link: Glycyl lysine isopeptide (Lys-Gly) (interchain with G-Cter in SUMO2). Phosphoserine occurs at positions 623, 626, and 678. A cleavage module binding motif (CMBM) region spans residues 649–694 (GPVSLLSLWSNRINTANSRKHQEFAGRLNSVNNRAELYQHLKEENG).

This sequence belongs to the Integrator subunit 13 family. As to quaternary structure, component of the Integrator complex, composed of core subunits INTS1, INTS2, INTS3, INTS4, INTS5, INTS6, INTS7, INTS8, INTS9/RC74, INTS10, INTS11/CPSF3L, INTS12, INTS13, INTS14 and INTS15. The core complex associates with protein phosphatase 2A subunits PPP2CA and PPP2R1A, to form the Integrator-PP2A (INTAC) complex. INTS13 is part of the tail subcomplex, composed of INTS10, INTS13, INTS14 and INTS15. Interacts with transcription factors ZNF609 and ZNF655. Interacts with PAFAH1B1; this interaction may be required for proper recruitment of dynein complexes to the nuclear envelope at prophase.

It is found in the nucleus. The protein localises to the cytoplasm. Component of the integrator complex, a multiprotein complex that terminates RNA polymerase II (Pol II) transcription in the promoter-proximal region of genes. The integrator complex provides a quality checkpoint during transcription elongation by driving premature transcription termination of transcripts that are unfavorably configured for transcriptional elongation: the complex terminates transcription by (1) catalyzing dephosphorylation of the C-terminal domain (CTD) of Pol II subunit POLR2A/RPB1 and SUPT5H/SPT5, (2) degrading the exiting nascent RNA transcript via endonuclease activity and (3) promoting the release of Pol II from bound DNA. The integrator complex is also involved in terminating the synthesis of non-coding Pol II transcripts, such as enhancer RNAs (eRNAs), small nuclear RNAs (snRNAs), telomerase RNAs and long non-coding RNAs (lncRNAs). Within the integrator complex, INTS13 is part of the integrator tail module and acts as a platform for the recruitment of transcription factors at promoters. At prophase, mediates recruitment of cytoplasmic dynein to the nuclear envelope, a step important for proper centrosome-nucleus coupling. At G2/M phase, may be required for proper spindle formation and execution of cytokinesis. The chain is Integrator complex subunit 13 from Mus musculus (Mouse).